The primary structure comprises 336 residues: Dual specificity mitogen-activated protein kinase kinase sek-1 (336 aa).

The Protein kinase domain maps to 50–311 (LVVLEELGKG…YPELLAMPFM (262 aa)). Residues 56-64 (LGKGGYGIV) and lysine 79 each bind ATP. Residue aspartate 176 is the Proton acceptor of the active site. At serine 204 the chain carries Phosphoserine. Threonine 208 is modified (phosphothreonine).

The protein belongs to the protein kinase superfamily. STE Ser/Thr protein kinase family. MAP kinase kinase subfamily. In terms of assembly, interacts with nsy-1. Interacts with unc-16. Mg(2+) serves as cofactor. As to expression, expressed in linker cell in males.

The catalysed reaction is L-seryl-[protein] + ATP = O-phospho-L-seryl-[protein] + ADP + H(+). It catalyses the reaction L-threonyl-[protein] + ATP = O-phospho-L-threonyl-[protein] + ADP + H(+). The enzyme catalyses L-tyrosyl-[protein] + ATP = O-phospho-L-tyrosyl-[protein] + ADP + H(+). Its activity is regulated as follows. Activated by nsy-1-mediated phosphorylation. In terms of biological role, dual specificity protein kinase which acts as an essential component of the p38 signal transduction pathway which is also composed of upstream effector nsy-1 and downstream effector pmk-1. May phosphorylate pmk-1. Downstream of CaMKII unc-43 and adapter protein tir-1, plays a role in determining asymmetric cell fates in olfactory AWC neurons during neuronal development. Activation results in the repression of odorant receptor str-2 expression in one of the 2 AWC neurons. Involved in resistance to pathogenic Gram-positive and Gram-negative bacterial and fungal infection. Involved in resistance to the nematotoxic C.cinerea galectin Cgl2. Probably by promoting pmk-1-mediated activation of skn-1, involved in the up-regulation of gcs-1 and glutathione-S-transferase gst-4 expression upon bacterial infection. Probably downstream of tir-1, required for the expression of antimicrobial peptide nlp-29 in the epidermis in response to fungal infection or physical injury. Regulates susceptibility of B.thuringiensis pore-forming toxin Cry5B and Cry21A. Involved in the response to oxidative stress. May regulate transcription factor daf-16 localization during oxidative stress. By phosphorylating pmk-1, regulates skn-1 localization during oxidative stress. By phosphorylating and activating pmk-1, plays a role in the stabilization of transcription factor rnt-1 in the intestine during oxidative stress. Up-regulates expression of gcs-1 in intestine upon arsenite treatment. Regulates germline proliferation in response to osmotic stress, starvation and germline apoptosis induced by heavy metals, such as Cu(2+). In association with mek-1, regulates germline cell apoptosis in response to oxidative, osmotic and heat shock stresses. Plays a role downstream of tir-1/nsy-1 in regulating susceptibility to anoxia. In males, by regulating pqn-41 expression, involved in non-apoptotic death of the linker cell which guides gonad elongation during larval development. Involved in egg laying. This chain is Dual specificity mitogen-activated protein kinase kinase sek-1, found in Caenorhabditis elegans.